A 296-amino-acid chain; its full sequence is Glycine--tRNA ligase alpha subunit (296 aa).

Belongs to the class-II aminoacyl-tRNA synthetase family. In terms of assembly, tetramer of two alpha and two beta subunits.

It localises to the cytoplasm. The catalysed reaction is tRNA(Gly) + glycine + ATP = glycyl-tRNA(Gly) + AMP + diphosphate. This is Glycine--tRNA ligase alpha subunit from Listeria monocytogenes serotype 4a (strain HCC23).